The following is a 488-amino-acid chain: Monodehydroascorbate reductase 4, peroxisomal (488 aa).

Residues 1–3 (MGR) lie on the Cytoplasmic side of the membrane. The chain crosses the membrane as a helical span at residues 4-24 (AFVYVILGGGVAAGYAALEFT). FAD-binding positions include 12 to 15 (GGVA), E39, R46, K51, and 145 to 146 (RD). Over 25 to 458 (RRGVSDGELC…SASVVMIKKP (434 aa)) the chain is Peroxisomal. Residues 170–176 (GGYIGME), E194, R200, and G259 each bind NAD(+). 172–176 (YIGME) contacts NADP(+). The NADP(+) site is built by R200 and G259. D296 serves as a coordination point for FAD. 312–313 (EH) serves as a coordination point for NAD(+). 312 to 313 (EH) serves as a coordination point for NADP(+). Position 314 (V314) interacts with FAD. R318 contributes to the L-ascorbate binding site. Y344 contacts FAD. Y344 contributes to the NAD(+) binding site. Position 344 (Y344) interacts with NADP(+). R346 is an L-ascorbate binding site. A helical membrane pass occupies residues 459 to 479 (LYVWHAATGVVVAASVAAFAF). At 480–488 (WYGRRRRRW) the chain is on the cytoplasmic side.

The protein belongs to the FAD-dependent oxidoreductase family. Requires FAD as cofactor.

The protein localises to the peroxisome membrane. The catalysed reaction is 2 monodehydro-L-ascorbate radical + NADH + H(+) = 2 L-ascorbate + NAD(+). In terms of biological role, catalyzes the conversion of monodehydroascorbate to ascorbate, oxidizing NADH in the process. Involved in the detoxification of H(2)O(2) that escapes the peroxisome and causes oxidative damage to oil bodies. This is Monodehydroascorbate reductase 4, peroxisomal from Arabidopsis thaliana (Mouse-ear cress).